The following is a 376-amino-acid chain: MQNRRKAFDKLCPNTMPDLSSRMGKRQSKTEKKLHKNIFTHTGPVTIYVDPPSSVDSAALATIDWQDLADCNSVIQQDAAGGALTEQQQQGHCLPGESDFDLQEFRDAVDQFIADQPSLMQPGLGSSGFQLPCNGSVFEPCMTDTLQPQPDHLLPISVQSIPSTEQYWRDVADHNQKALGDALVENNQLQVSLTEKQEEIASLKEKNIQLNELANQAKHLASVLDKLMKERPKHSSGATQGRLPVKRSLEDFYPQSNEPDSTQVDEILREISKKCNIALMGNELSESKRPRLEPMDTMGWQEEGITKIKMCGAFNGLKTSTGLNSVNLGETELEEDVSFRTSIKEHSTIRTLAFPQGNAFTIRTAAGGYKFRWVPN.

The stretch at 165–213 (EQYWRDVADHNQKALGDALVENNQLQVSLTEKQEEIASLKEKNIQLNEL) forms a coiled coil. The disordered stretch occupies residues 230–261 (ERPKHSSGATQGRLPVKRSLEDFYPQSNEPDS). Residues 331–376 (TELEEDVSFRTSIKEHSTIRTLAFPQGNAFTIRTAAGGYKFRWVPN) form a TIRT domain region.

Belongs to the geminin family. Component of the EDM complex, at least composed of e2f4, e2f5, mcidas and tfdp1.

Its subcellular location is the nucleus. In terms of biological role, transcription regulator specifically required for multiciliate cell differentiation. Acts in a multiprotein complex containing e2f4 and e2f5 that binds and activate genes required for centriole biogenesis. Activates genes required for centriole assembly (plk4, cep152) and genes specifically required for motile cilia formation (foxj1). Also promotes the deuterosome pathway of centriole biogenesis by activating expression of deup1, but not its paralog cep63. This Xenopus tropicalis (Western clawed frog) protein is Multicilin (mcidas).